Consider the following 275-residue polypeptide: Proteasome subunit beta (275 aa).

Residues 1-52 constitute a propeptide, removed in mature form; by autocatalysis; sequence MQDTTANQVAANATSSFTEHLQRNRPGLLPYNQPFPAALTGAGSQPLQVPHA. The active-site Nucleophile is the Thr53.

The protein belongs to the peptidase T1B family. In terms of assembly, the 20S proteasome core is composed of 14 alpha and 14 beta subunits that assemble into four stacked heptameric rings, resulting in a barrel-shaped structure. The two inner rings, each composed of seven catalytic beta subunits, are sandwiched by two outer rings, each composed of seven alpha subunits. The catalytic chamber with the active sites is on the inside of the barrel. Has a gated structure, the ends of the cylinder being occluded by the N-termini of the alpha-subunits. Is capped by the proteasome-associated ATPase, ARC.

It localises to the cytoplasm. It carries out the reaction Cleavage of peptide bonds with very broad specificity.. The protein operates within protein degradation; proteasomal Pup-dependent pathway. With respect to regulation, the formation of the proteasomal ATPase ARC-20S proteasome complex, likely via the docking of the C-termini of ARC into the intersubunit pockets in the alpha-rings, may trigger opening of the gate for substrate entry. Interconversion between the open-gate and close-gate conformations leads to a dynamic regulation of the 20S proteasome proteolysis activity. In terms of biological role, component of the proteasome core, a large protease complex with broad specificity involved in protein degradation. This chain is Proteasome subunit beta, found in Arthrobacter sp. (strain FB24).